The following is a 141-amino-acid chain: VLSPADKTNIKSTWDKIGGHAGDYGGEALDRTFQSFPTTKTYFPHFDLSPGSAQVKAHGKKVADALTTAVAHLDDLPGALSALSDLHAYKLRVDPVNFKLLSHCLLVTLACHHPTEFTPAVHASLDKFFAAVSTVLTSKYR.

The region spanning 1-141 is the Globin domain; sequence VLSPADKTNI…VSTVLTSKYR (141 aa). Position 3 is a phosphoserine (S3). The residue at position 7 (K7) is an N6-succinyllysine. T8 is modified (phosphothreonine). The residue at position 11 (K11) is an N6-succinyllysine. K16 is subject to N6-acetyllysine; alternate. K16 carries the post-translational modification N6-succinyllysine; alternate. Y24 bears the Phosphotyrosine mark. The residue at position 35 (S35) is a Phosphoserine. Residue K40 is modified to N6-succinyllysine. S49 is modified (phosphoserine). H58 contacts O2. Position 87 (H87) interacts with heme b. The residue at position 102 (S102) is a Phosphoserine. T108 is subject to Phosphothreonine. S124 is modified (phosphoserine). T134 and T137 each carry phosphothreonine. Phosphoserine is present on S138.

It belongs to the globin family. As to quaternary structure, heterotetramer of two alpha chains and two beta chains. Red blood cells.

In terms of biological role, involved in oxygen transport from the lung to the various peripheral tissues. Hemopressin acts as an antagonist peptide of the cannabinoid receptor CNR1. Hemopressin-binding efficiently blocks cannabinoid receptor CNR1 and subsequent signaling. The protein is Hemoglobin subunit alpha (HBA) of Canis lupus familiaris (Dog).